Here is a 187-residue protein sequence, read N- to C-terminus: Protein TIFY 3B (187 aa).

Residues 1-10 show a composition bias toward basic and acidic residues; that stretch reads MTKVKDEPRA. The tract at residues 1-50 is disordered; that stretch reads MTKVKDEPRASVEGGCGVADGDGGAAEIGGTGSVEKSINEVRSTEIQTAE. The span at 14-32 shows a compositional bias: gly residues; that stretch reads GGCGVADGDGGAAEIGGTG. One can recognise a Tify domain in the interval 51–86; the sequence is PTVPPNQLTIFFGGSVTVFDGLPSEKVQEILRIAAK. The Jas motif lies at 139 to 163; it reads PIARRHSLQRFLEKRRDRLVNKNPY. The Nuclear localization signal motif lies at 141-148; it reads ARRHSLQR. Residues 152–187 are disordered; it reads KRRDRLVNKNPYPTSDFKKTDVPTGNVSIKEEFPTA.

It belongs to the TIFY/JAZ family. As to quaternary structure, interacts with MYC2, AFPH2/NINJA, TIFY10A/JAZ1, TIFY10B/JAZ2, TIFY11A/JAZ5, TIFY11B/JAZ6, TIFY5A/JAZ8 and TIFY9/JAZ10. (Microbial infection) Interacts with the pathogenic Pseudomonas syringae HopZ1a protein. (Microbial infection) Acetylated by Pseudomonas syringae HopZ1a. Post-translationally, ubiquitinated. Targeted for degradation by the SCF(COI1) E3 ubiquitin ligase-proteasome pathway during jasmonate signaling.

The protein resides in the nucleus. Its function is as follows. Repressor of jasmonate responses. The protein is Protein TIFY 3B of Arabidopsis thaliana (Mouse-ear cress).